The primary structure comprises 607 residues: Coronin-like protein cor-1 (607 aa).

WD repeat units follow at residues 77–117 (AHKA…LNRN), 127–167 (GHQK…ALLE), and 170–209 (GHPDQIWSINFNFDGSQFVTTCKDKKIRILDSHTGEVVHE). The disordered stretch occupies residues 415-564 (PTAAESVPTQ…VSAASDVGHV (150 aa)). Residues 424-436 (QSYSERPPSSQQP) are compositionally biased toward low complexity. Pro residues predominate over residues 437–447 (SPRPSASPRPR). Basic and acidic residues-rich tracts occupy residues 473–489 (SRTEIPPKEESKVDPMK) and 517–533 (AAAELERIKRDQSRTAD). Over residues 544-559 (SSRASASPRGSVSAAS) the composition is skewed to low complexity. A coiled-coil region spans residues 563 to 602 (HVPQNMDELLEDLMKMKAVLRQHERRIRMLEEEIADRNMS).

This sequence belongs to the WD repeat coronin family.

It is found in the cytoplasm. The protein resides in the cytoskeleton. In terms of biological role, required to direct the migration of Q neuroblasts along the anterior axis of the body during larval development. This is dependent on its asymmetric expression in Q neuroblasts. The chain is Coronin-like protein cor-1 (cor-1) from Caenorhabditis elegans.